We begin with the raw amino-acid sequence, 103 residues long: Large ribosomal subunit protein bL21 (103 aa).

This sequence belongs to the bacterial ribosomal protein bL21 family. As to quaternary structure, part of the 50S ribosomal subunit. Contacts protein L20.

Its function is as follows. This protein binds to 23S rRNA in the presence of protein L20. This Pseudomonas syringae pv. syringae (strain B728a) protein is Large ribosomal subunit protein bL21.